The chain runs to 170 residues: ATP synthase subunit b (170 aa).

Residues 5–25 (YFIPCLLLPTMMLASGGGGET) form a helical membrane-spanning segment.

This sequence belongs to the ATPase B chain family. In terms of assembly, F-type ATPases have 2 components, F(1) - the catalytic core - and F(0) - the membrane proton channel. F(1) has five subunits: alpha(3), beta(3), gamma(1), delta(1), epsilon(1). F(0) has three main subunits: a(1), b(2) and c(10-14). The alpha and beta chains form an alternating ring which encloses part of the gamma chain. F(1) is attached to F(0) by a central stalk formed by the gamma and epsilon chains, while a peripheral stalk is formed by the delta and b chains.

It is found in the cell inner membrane. F(1)F(0) ATP synthase produces ATP from ADP in the presence of a proton or sodium gradient. F-type ATPases consist of two structural domains, F(1) containing the extramembraneous catalytic core and F(0) containing the membrane proton channel, linked together by a central stalk and a peripheral stalk. During catalysis, ATP synthesis in the catalytic domain of F(1) is coupled via a rotary mechanism of the central stalk subunits to proton translocation. In terms of biological role, component of the F(0) channel, it forms part of the peripheral stalk, linking F(1) to F(0). This Wolinella succinogenes (strain ATCC 29543 / DSM 1740 / CCUG 13145 / JCM 31913 / LMG 7466 / NCTC 11488 / FDC 602W) (Vibrio succinogenes) protein is ATP synthase subunit b.